The primary structure comprises 404 residues: Cysteine desulfurase IscS (404 aa).

Pyridoxal 5'-phosphate contacts are provided by residues 75 to 76, asparagine 155, glutamine 183, and 203 to 205; these read AT and SAH. N6-(pyridoxal phosphate)lysine is present on lysine 206. Residue threonine 243 coordinates pyridoxal 5'-phosphate. The active-site Cysteine persulfide intermediate is cysteine 328. Cysteine 328 contributes to the [2Fe-2S] cluster binding site.

The protein belongs to the class-V pyridoxal-phosphate-dependent aminotransferase family. NifS/IscS subfamily. In terms of assembly, homodimer. Forms a heterotetramer with IscU, interacts with other sulfur acceptors. The cofactor is pyridoxal 5'-phosphate.

Its subcellular location is the cytoplasm. It catalyses the reaction (sulfur carrier)-H + L-cysteine = (sulfur carrier)-SH + L-alanine. It participates in cofactor biosynthesis; iron-sulfur cluster biosynthesis. In terms of biological role, master enzyme that delivers sulfur to a number of partners involved in Fe-S cluster assembly, tRNA modification or cofactor biosynthesis. Catalyzes the removal of elemental sulfur atoms from cysteine to produce alanine. Functions as a sulfur delivery protein for Fe-S cluster synthesis onto IscU, an Fe-S scaffold assembly protein, as well as other S acceptor proteins. The protein is Cysteine desulfurase IscS of Pseudomonas syringae pv. syringae (strain B728a).